A 509-amino-acid polypeptide reads, in one-letter code: Glycerol kinase (509 aa).

T12 contributes to the ADP binding site. 3 residues coordinate ATP: T12, T13, and S14. A sn-glycerol 3-phosphate-binding site is contributed by T12. R16 contacts ADP. Sn-glycerol 3-phosphate-binding residues include R82, E83, Y134, and D245. Glycerol is bound by residues R82, E83, Y134, D245, and Q246. T267 and G311 together coordinate ADP. The ATP site is built by T267, G311, Q315, and G412. The ADP site is built by G412 and N416.

It belongs to the FGGY kinase family.

The enzyme catalyses glycerol + ATP = sn-glycerol 3-phosphate + ADP + H(+). Its pathway is polyol metabolism; glycerol degradation via glycerol kinase pathway; sn-glycerol 3-phosphate from glycerol: step 1/1. Inhibited by fructose 1,6-bisphosphate (FBP). In terms of biological role, key enzyme in the regulation of glycerol uptake and metabolism. Catalyzes the phosphorylation of glycerol to yield sn-glycerol 3-phosphate. The sequence is that of Glycerol kinase from Rhizorhabdus wittichii (strain DSM 6014 / CCUG 31198 / JCM 15750 / NBRC 105917 / EY 4224 / RW1) (Sphingomonas wittichii).